Reading from the N-terminus, the 1023-residue chain is Rho GTPase-activating protein 11A (1023 aa).

In terms of domain architecture, Rho-GAP spans 49–239; sequence VPFNALPHSA…TLIDYASDIG (191 aa). Residue serine 285 is modified to Phosphoserine. Threonine 306 carries the phosphothreonine modification. Residues serine 316 and serine 318 each carry the phosphoserine modification. Position 323 is a phosphothreonine (threonine 323). Phosphoserine occurs at positions 339, 340, and 484. Threonine 508 carries the phosphothreonine modification. The disordered stretch occupies residues 567-589; it reads TPSNLNNKHNSNITSSPLSGDEN. Residues serine 582, serine 585, serine 638, and serine 675 each carry the phosphoserine modification. The disordered stretch occupies residues 714-734; it reads KQEFSSDEEIKKQQSPKDKLN. Residues 721 to 734 are compositionally biased toward basic and acidic residues; sequence EEIKKQQSPKDKLN. Position 847 is a phosphoserine (serine 847). Threonine 866 bears the Phosphothreonine mark. Serine 868 is subject to Phosphoserine. The disordered stretch occupies residues 999–1023; it reads AWYKGSPKHPIGKTQLLPTSKPVDL.

Its subcellular location is the nucleus. GTPase activator for the Rho-type GTPases by converting them to an inactive GDP-bound state. The sequence is that of Rho GTPase-activating protein 11A from Homo sapiens (Human).